The primary structure comprises 381 residues: Early boundary activity protein 2 (381 aa).

Residues 210–245 (NDAEDVPAPPSKRPRHMSTSSSESHIPDTASEKDEK) are disordered. Residues 268–365 (PNGTQITAHQ…TKCADTAKKY (98 aa)) form the BEN domain.

As to quaternary structure, the heterotrimeric Elba complex consists of Elba1, Elba2 and Elba3.

It localises to the nucleus. Its function is as follows. The heterotrimeric Elba complex is required for chromatin domain boundary function during early embryogenesis. It binds to a 8-bp sequence 5'-CCAATAAG-3' in the Fab-7 insulator or boundary element in the bithorax complex and contributes to its insulator or boundary activity. Elba2 can act as a transcriptional repressor and binds the palindromic sequence 5'-CCAATTGG-3' to mediate transcriptional repression. The polypeptide is Early boundary activity protein 2 (Drosophila melanogaster (Fruit fly)).